Reading from the N-terminus, the 967-residue chain is RNA polymerase-associated protein RapA (967 aa).

The region spanning 163 to 333 is the Helicase ATP-binding domain; sequence EVGQRHAPRV…FARLRLLDPN (171 aa). ATP is bound at residue 176–183; it reads DEVGLGKT. Positions 279–282 match the DEAH box motif; sequence DEAH. A Helicase C-terminal domain is found at 489-677; sequence RVEWLLNYLT…TCRQQHDSLK (189 aa).

The protein belongs to the SNF2/RAD54 helicase family. RapA subfamily. Interacts with the RNAP. Has a higher affinity for the core RNAP than for the holoenzyme. Its ATPase activity is stimulated by binding to RNAP.

Its function is as follows. Transcription regulator that activates transcription by stimulating RNA polymerase (RNAP) recycling in case of stress conditions such as supercoiled DNA or high salt concentrations. Probably acts by releasing the RNAP, when it is trapped or immobilized on tightly supercoiled DNA. Does not activate transcription on linear DNA. Probably not involved in DNA repair. The polypeptide is RNA polymerase-associated protein RapA (Pectobacterium atrosepticum (strain SCRI 1043 / ATCC BAA-672) (Erwinia carotovora subsp. atroseptica)).